The sequence spans 398 residues: Acetyl-CoA acetyltransferase (398 aa).

An N-acetylserine modification is found at S2. The active-site Acyl-thioester intermediate is the C91. Residues Y186 and K231 each contribute to the CoA site. K(+) is bound at residue Y186. K(+)-binding residues include A248, A249, and A251. Residue S252 coordinates CoA. V350 is a binding site for K(+). Residues H354 and C384 each act as proton acceptor in the active site.

It belongs to the thiolase-like superfamily. Thiolase family. As to quaternary structure, homotetramer.

It is found in the cytoplasm. The protein localises to the cytosol. The enzyme catalyses 2 acetyl-CoA = acetoacetyl-CoA + CoA. It participates in metabolic intermediate biosynthesis; (R)-mevalonate biosynthesis; (R)-mevalonate from acetyl-CoA: step 1/3. Functionally, acetyl-CoA acetyltransferase; part of the first module of ergosterol biosynthesis pathway that includes the early steps of the pathway, conserved across all eukaryotes, and which results in the formation of mevalonate from acetyl-coenzyme A (acetyl-CoA). ERG10 catalyzes the formation of acetoacetyl-CoA from acetyl-CoA. The first module starts with the action of the cytosolic acetyl-CoA acetyltransferase ERG10 that catalyzes the formation of acetoacetyl-CoA. The hydroxymethylglutaryl-CoA synthase ERG13 then condenses acetyl-CoA with acetoacetyl-CoA to form HMG-CoA. The rate-limiting step of the early module is the reduction to mevalonate by the 3-hydroxy-3-methylglutaryl-coenzyme A (HMG-CoA) reductases HMG1 and HMG2 which are derived from a single ancestral HMGR gene by gene duplication. The polypeptide is Acetyl-CoA acetyltransferase (Saccharomyces cerevisiae (strain ATCC 204508 / S288c) (Baker's yeast)).